The primary structure comprises 305 residues: tRNA pseudouridine synthase B (305 aa).

Asp-39 functions as the Nucleophile in the catalytic mechanism.

Belongs to the pseudouridine synthase TruB family. Type 1 subfamily.

It catalyses the reaction uridine(55) in tRNA = pseudouridine(55) in tRNA. In terms of biological role, responsible for synthesis of pseudouridine from uracil-55 in the psi GC loop of transfer RNAs. This Staphylococcus epidermidis (strain ATCC 35984 / DSM 28319 / BCRC 17069 / CCUG 31568 / BM 3577 / RP62A) protein is tRNA pseudouridine synthase B.